Here is a 201-residue protein sequence, read N- to C-terminus: Ubiquitin-conjugating enzyme E2 E2 (201 aa).

Residues 1–10 (MSTEAQRVDD) are compositionally biased toward basic and acidic residues. The segment at 1–55 (MSTEAQRVDDSPSTSGGSSDGDQRESVQQEPDREQVQPKKKEGKISSKTAAKLST) is disordered. N-acetylserine is present on S2. Phosphoserine is present on residues S11, S15, S18, and S19. Residues 21-45 (GDQRESVQQEPDREQVQPKKKEGKI) show a composition bias toward basic and acidic residues. The span at 46–55 (SSKTAAKLST) shows a compositional bias: low complexity. The UBC core domain occupies 55-201 (TSAKRIQKEL…ARQWTKRYAT (147 aa)). C139 (glycyl thioester intermediate) is an active-site residue.

This sequence belongs to the ubiquitin-conjugating enzyme family. Post-translationally, autoubiquitinated.

It catalyses the reaction S-ubiquitinyl-[E1 ubiquitin-activating enzyme]-L-cysteine + [E2 ubiquitin-conjugating enzyme]-L-cysteine = [E1 ubiquitin-activating enzyme]-L-cysteine + S-ubiquitinyl-[E2 ubiquitin-conjugating enzyme]-L-cysteine.. The protein operates within protein modification; protein ubiquitination. Functionally, accepts ubiquitin from the E1 complex and catalyzes its covalent attachment to other proteins. In vitro catalyzes 'Lys-11'- and 'Lys-48'-, as well as 'Lys-63'-linked polyubiquitination. Catalyzes the ISGylation of influenza A virus NS1 protein. The sequence is that of Ubiquitin-conjugating enzyme E2 E2 (Ube2e2) from Mus musculus (Mouse).